The following is a 207-amino-acid chain: FMN-dependent NADH:quinone oxidoreductase (207 aa).

S10 lines the FMN pocket.

The protein belongs to the azoreductase type 1 family. As to quaternary structure, homodimer. Requires FMN as cofactor.

It carries out the reaction 2 a quinone + NADH + H(+) = 2 a 1,4-benzosemiquinone + NAD(+). The enzyme catalyses N,N-dimethyl-1,4-phenylenediamine + anthranilate + 2 NAD(+) = 2-(4-dimethylaminophenyl)diazenylbenzoate + 2 NADH + 2 H(+). Functionally, quinone reductase that provides resistance to thiol-specific stress caused by electrophilic quinones. Its function is as follows. Also exhibits azoreductase activity. Catalyzes the reductive cleavage of the azo bond in aromatic azo compounds to the corresponding amines. The chain is FMN-dependent NADH:quinone oxidoreductase from Shouchella clausii (strain KSM-K16) (Alkalihalobacillus clausii).